Reading from the N-terminus, the 137-residue chain is Putative pre-16S rRNA nuclease (137 aa).

The protein belongs to the YqgF nuclease family.

The protein localises to the cytoplasm. Could be a nuclease involved in processing of the 5'-end of pre-16S rRNA. The sequence is that of Putative pre-16S rRNA nuclease from Anaeromyxobacter dehalogenans (strain 2CP-1 / ATCC BAA-258).